A 255-amino-acid polypeptide reads, in one-letter code: MSGNTALDYIQHHLTNLAVGEGYWTFHVDSLIMSFSLGALFCYLFWLGARRATAGVPSGLQNFVELMVEFVDQTTRETFQGKSRLIAPLALTIFCWIFLMNLMDLVPIDMVPSLMYAAGVDYFKILPTVDLNVTFALSISVFFLIIAYSFKGKGAGGFAKELLFHPFGPWLLPFNLILNIIELIAKPISLSLRLFGNMYAAELIFILISLLPWWIQWALGTPWAIFHILVIPLQAFIFMMLTVVYLSMANEHEEH.

The next 6 membrane-spanning stretches (helical) occupy residues 28-48 (VDSL…FWLG), 86-106 (IAPL…MDLV), 125-145 (ILPT…FFLI), 164-184 (FHPF…IELI), 203-223 (LIFI…GTPW), and 224-244 (AIFH…LTVV).

It belongs to the ATPase A chain family. As to quaternary structure, F-type ATPases have 2 components, CF(1) - the catalytic core - and CF(0) - the membrane proton channel. CF(1) has five subunits: alpha(3), beta(3), gamma(1), delta(1), epsilon(1). CF(0) has three main subunits: a(1), b(2) and c(9-12). The alpha and beta chains form an alternating ring which encloses part of the gamma chain. CF(1) is attached to CF(0) by a central stalk formed by the gamma and epsilon chains, while a peripheral stalk is formed by the delta and b chains.

The protein resides in the cell inner membrane. Key component of the proton channel; it plays a direct role in the translocation of protons across the membrane. In Alkalilimnicola ehrlichii (strain ATCC BAA-1101 / DSM 17681 / MLHE-1), this protein is ATP synthase subunit a.